A 350-amino-acid polypeptide reads, in one-letter code: Nicotinate-nucleotide--dimethylbenzimidazole phosphoribosyltransferase (350 aa).

The Proton acceptor role is filled by Glu-317.

This sequence belongs to the CobT family.

It catalyses the reaction 5,6-dimethylbenzimidazole + nicotinate beta-D-ribonucleotide = alpha-ribazole 5'-phosphate + nicotinate + H(+). It participates in nucleoside biosynthesis; alpha-ribazole biosynthesis; alpha-ribazole from 5,6-dimethylbenzimidazole: step 1/2. Catalyzes the synthesis of alpha-ribazole-5'-phosphate from nicotinate mononucleotide (NAMN) and 5,6-dimethylbenzimidazole (DMB). This Shewanella sp. (strain ANA-3) protein is Nicotinate-nucleotide--dimethylbenzimidazole phosphoribosyltransferase.